A 101-amino-acid polypeptide reads, in one-letter code: Small ribosomal subunit protein bS18c (101 aa).

The segment covering 1 to 19 (MDKSKRLFRKSKRSFRRRL) has biased composition (basic residues). A disordered region spans residues 1–23 (MDKSKRLFRKSKRSFRRRLPPIG).

It belongs to the bacterial ribosomal protein bS18 family. Part of the 30S ribosomal subunit.

The protein localises to the plastid. Its subcellular location is the chloroplast. The polypeptide is Small ribosomal subunit protein bS18c (Liriodendron tulipifera (Tuliptree)).